The following is a 259-amino-acid chain: 5'-nucleotidase SurE (259 aa).

Residues D8, D9, S40, and N92 each coordinate a divalent metal cation.

The protein belongs to the SurE nucleotidase family. The cofactor is a divalent metal cation.

Its subcellular location is the cytoplasm. The enzyme catalyses a ribonucleoside 5'-phosphate + H2O = a ribonucleoside + phosphate. Its function is as follows. Nucleotidase that shows phosphatase activity on nucleoside 5'-monophosphates. The polypeptide is 5'-nucleotidase SurE (Stenotrophomonas maltophilia (strain R551-3)).